Consider the following 154-residue polypeptide: Jupiter microtubule associated homolog 1 (154 aa).

An N-acetylmethionine modification is found at M1. Residues 1–19 (MTTTTTFKGVDPNSRNSSR) are compositionally biased toward polar residues. The tract at residues 1 to 154 (MTTTTTFKGV…PGGKSSLVLG (154 aa)) is disordered. Position 2 is an N-acetylthreonine; in Hematological and neurological expressed 1 protein, N-terminally processed (T2). A phosphoserine mark is found at S28 and S31. T54 is modified (phosphothreonine). Phosphoserine is present on residues S71, S80, S87, S88, and S92. The segment covering 80 to 91 (SGPQRRNSSEAN) has biased composition (polar residues). A compositionally biased stretch (basic and acidic residues) spans 96–108 (LDLKGEGDVHENV). Residues 125–138 (PAAPVPSPVAPAPV) show a composition bias toward pro residues. At S131 the chain carries Phosphoserine. K148 is subject to N6-acetyllysine.

This sequence belongs to the JUPITER family. Interacts with the complex composed, at least, of APC, CTNNB1 and GSK3B; the interaction takes place with the inactive form of GSK3B (phosphorylated at 'Ser-9').

The protein resides in the nucleus. Its subcellular location is the cytoplasm. Functionally, modulates negatively AKT-mediated GSK3B signaling. Induces CTNNB1 'Ser-33' phosphorylation and degradation through the suppression of the inhibitory 'Ser-9' phosphorylation of GSK3B, which represses the function of the APC:CTNNB1:GSK3B complex and the interaction with CDH1/E-cadherin in adherent junctions. Plays a role in the regulation of cell cycle and cell adhesion. Has an inhibitory role on AR-signaling pathway through the induction of receptor proteasomal degradation. The sequence is that of Jupiter microtubule associated homolog 1 from Bos taurus (Bovine).